Consider the following 542-residue polypeptide: CTP synthase (542 aa).

An amidoligase domain region spans residues 1–269 (MQTKYIFITG…DALICELLHL (269 aa)). Ser14 serves as a coordination point for CTP. Ser14 is a UTP binding site. ATP contacts are provided by residues 15–20 (SLGKGL) and Asp72. Residues Asp72 and Glu143 each coordinate Mg(2+). CTP is bound by residues 150–152 (DIE), 189–194 (KTKPSQ), and Lys225. Residues 189 to 194 (KTKPSQ) and Lys225 contribute to the UTP site. Position 241 to 243 (241 to 243 (KDV)) interacts with ATP. A Glutamine amidotransferase type-1 domain is found at 301 to 538 (YVQHQDAYKS…IQAMIIYHKS (238 aa)). An L-glutamine-binding site is contributed by Gly358. The active-site Nucleophile; for glutamine hydrolysis is the Cys385. L-glutamine-binding positions include 386 to 389 (LGMQ), Glu409, and Arg466. Active-site residues include His511 and Glu513.

The protein belongs to the CTP synthase family. Homotetramer.

The catalysed reaction is UTP + L-glutamine + ATP + H2O = CTP + L-glutamate + ADP + phosphate + 2 H(+). The enzyme catalyses L-glutamine + H2O = L-glutamate + NH4(+). It catalyses the reaction UTP + NH4(+) + ATP = CTP + ADP + phosphate + 2 H(+). The protein operates within pyrimidine metabolism; CTP biosynthesis via de novo pathway; CTP from UDP: step 2/2. Allosterically activated by GTP, when glutamine is the substrate; GTP has no effect on the reaction when ammonia is the substrate. The allosteric effector GTP functions by stabilizing the protein conformation that binds the tetrahedral intermediate(s) formed during glutamine hydrolysis. Inhibited by the product CTP, via allosteric rather than competitive inhibition. Functionally, catalyzes the ATP-dependent amination of UTP to CTP with either L-glutamine or ammonia as the source of nitrogen. Regulates intracellular CTP levels through interactions with the four ribonucleotide triphosphates. This is CTP synthase from Protochlamydia amoebophila (strain UWE25).